The sequence spans 521 residues: Biotinidase (521 aa).

An N-terminal signal peptide occupies residues 1 to 25 (MSGARTAHALVFLLGCSALALGVCS). Residues 50–329 (NPLELSSRQQ…QGLVGTENTT (280 aa)) form the CN hydrolase domain. Glu90 (proton acceptor) is an active-site residue. Residues Asn128 and Asn181 are each glycosylated (N-linked (GlcNAc...) asparagine). Residue Lys190 is the Proton donor of the active site. The active-site Nucleophile is Cys223. An N-linked (GlcNAc...) asparagine glycan is attached at Asn380.

The protein belongs to the carbon-nitrogen hydrolase superfamily. BTD/VNN family.

The protein localises to the secreted. It localises to the extracellular space. The catalysed reaction is biocytin + H2O = biotin + L-lysine. It catalyses the reaction biotin amide + H2O = biotin + NH4(+). Functionally, catalytic release of biotin from biocytin, the product of biotin-dependent carboxylases degradation. This chain is Biotinidase, found in Rattus norvegicus (Rat).